Consider the following 205-residue polypeptide: Dephospho-CoA kinase (205 aa).

In terms of domain architecture, DPCK spans 4-203 (KIGITGGIGS…QKIHYLCSAK (200 aa)). Position 12–17 (12–17 (GSGKSV)) interacts with ATP.

This sequence belongs to the CoaE family.

It localises to the cytoplasm. The enzyme catalyses 3'-dephospho-CoA + ATP = ADP + CoA + H(+). Its pathway is cofactor biosynthesis; coenzyme A biosynthesis; CoA from (R)-pantothenate: step 5/5. Its function is as follows. Catalyzes the phosphorylation of the 3'-hydroxyl group of dephosphocoenzyme A to form coenzyme A. The protein is Dephospho-CoA kinase of Bacteroides fragilis (strain YCH46).